A 445-amino-acid chain; its full sequence is Na(+)-translocating NADH-quinone reductase subunit A (445 aa).

It belongs to the NqrA family. As to quaternary structure, composed of six subunits; NqrA, NqrB, NqrC, NqrD, NqrE and NqrF.

It carries out the reaction a ubiquinone + n Na(+)(in) + NADH + H(+) = a ubiquinol + n Na(+)(out) + NAD(+). In terms of biological role, NQR complex catalyzes the reduction of ubiquinone-1 to ubiquinol by two successive reactions, coupled with the transport of Na(+) ions from the cytoplasm to the periplasm. NqrA to NqrE are probably involved in the second step, the conversion of ubisemiquinone to ubiquinol. This is Na(+)-translocating NADH-quinone reductase subunit A from Teredinibacter turnerae (strain ATCC 39867 / T7901).